Consider the following 48-residue polypeptide: Sulfide dehydrogenase [flavocytochrome c] flavoprotein chain (48 aa).

Residue 40 to 46 coordinates FAD; sequence VTCPFSN.

In terms of assembly, dimer of one cytochrome and one flavoprotein.

Its subcellular location is the periplasm. It carries out the reaction hydrogen sulfide + 2 Fe(III)-[cytochrome c] = sulfur + 2 Fe(II)-[cytochrome c] + H(+). In Chlorobaculum thiosulfatiphilum (Chlorobium limicola f.sp. thiosulfatophilum), this protein is Sulfide dehydrogenase [flavocytochrome c] flavoprotein chain.